Consider the following 919-residue polypeptide: Probable glucan 1,3-alpha-glucosidase (919 aa).

The N-terminal stretch at 1–28 is a signal peptide; it reads MDPPPRPRPHRVAVLLLLLLASSPAARA. The Nucleophile role is filled by aspartate 510. The active site involves glutamate 513. The Proton donor role is filled by aspartate 586. N-linked (GlcNAc...) asparagine glycosylation is present at asparagine 802.

This sequence belongs to the glycosyl hydrolase 31 family. As to quaternary structure, heterodimer of a catalytic alpha subunit and a beta subunit.

The protein localises to the endoplasmic reticulum. It catalyses the reaction N(4)-(alpha-D-Glc-(1-&gt;3)-alpha-D-Man-(1-&gt;2)-alpha-D-Man-(1-&gt;2)-alpha-D-Man-(1-&gt;3)-[alpha-D-Man-(1-&gt;2)-alpha-D-Man-(1-&gt;3)-[alpha-D-Man-(1-&gt;2)-alpha-D-Man-(1-&gt;6)]-alpha-D-Man-(1-&gt;6)]-beta-D-Man-(1-&gt;4)-beta-D-GlcNAc-(1-&gt;4)-beta-D-GlcNAc)-L-asparaginyl-[protein] + H2O = N(4)-(alpha-D-Man-(1-&gt;2)-alpha-D-Man-(1-&gt;2)-alpha-D-Man-(1-&gt;3)-[alpha-D-Man-(1-&gt;2)-alpha-D-Man-(1-&gt;3)-[alpha-D-Man-(1-&gt;2)-alpha-D-Man-(1-&gt;6)]-alpha-D-Man-(1-&gt;6)]-beta-D-Man-(1-&gt;4)-beta-D-GlcNAc-(1-&gt;4)-beta-D-GlcNAc)-L-asparaginyl-[protein] (N-glucan mannose isomer 9A1,2,3B1,2,3) + beta-D-glucose. The catalysed reaction is N(4)-(alpha-D-Glc-(1-&gt;3)-alpha-D-Glc-(1-&gt;3)-alpha-D-Man-(1-&gt;2)-alpha-D-Man-(1-&gt;2)-alpha-D-Man-(1-&gt;3)-[alpha-D-Man-(1-&gt;2)-alpha-D-Man-(1-&gt;3)-[alpha-D-Man-(1-&gt;2)-alpha-D-Man-(1-&gt;6)]-alpha-D-Man-(1-&gt;6)]-beta-D-Man-(1-&gt;4)-beta-D-GlcNAc-(1-&gt;4)-beta-D-GlcNAc)-L-asparaginyl-[protein] + H2O = N(4)-(alpha-D-Glc-(1-&gt;3)-alpha-D-Man-(1-&gt;2)-alpha-D-Man-(1-&gt;2)-alpha-D-Man-(1-&gt;3)-[alpha-D-Man-(1-&gt;2)-alpha-D-Man-(1-&gt;3)-[alpha-D-Man-(1-&gt;2)-alpha-D-Man-(1-&gt;6)]-alpha-D-Man-(1-&gt;6)]-beta-D-Man-(1-&gt;4)-beta-D-GlcNAc-(1-&gt;4)-beta-D-GlcNAc)-L-asparaginyl-[protein] + beta-D-glucose. It functions in the pathway glycan metabolism; N-glycan metabolism. In terms of biological role, cleaves sequentially the 2 innermost alpha-1,3-linked glucose residues from the Glc(2)Man(9)GlcNAc(2) oligosaccharide precursor of immature glycoproteins. May be required for defense response elicited by pathogen-associated molecular patterns (PAMPs). This is Probable glucan 1,3-alpha-glucosidase from Oryza sativa subsp. japonica (Rice).